We begin with the raw amino-acid sequence, 202 residues long: HTH-type transcriptional regulator BetI 1 (202 aa).

In terms of domain architecture, HTH tetR-type spans 8 to 68 (PIRRRQLIQA…SAMRQILWDL (61 aa)). The H-T-H motif DNA-binding region spans 31-50 (TIARIAKRAGVSAGIISHYF).

It participates in amine and polyamine biosynthesis; betaine biosynthesis via choline pathway [regulation]. Its function is as follows. Repressor involved in the biosynthesis of the osmoprotectant glycine betaine. It represses transcription of the choline transporter BetT and the genes of BetAB involved in the synthesis of glycine betaine. This Chromohalobacter salexigens (strain ATCC BAA-138 / DSM 3043 / CIP 106854 / NCIMB 13768 / 1H11) protein is HTH-type transcriptional regulator BetI 1.